A 487-amino-acid polypeptide reads, in one-letter code: Ribosomal protein uS12 methylthiotransferase RimO (487 aa).

In terms of domain architecture, MTTase N-terminal spans 38–149; the sequence is PTVAFAHLGC…IVEVLEQVEA (112 aa). Residues cysteine 47, cysteine 83, cysteine 112, cysteine 187, cysteine 191, and cysteine 194 each contribute to the [4Fe-4S] cluster site. Residues 173 to 402 enclose the Radical SAM core domain; the sequence is TTSEAVAYLK…MEAQQAISAE (230 aa). One can recognise a TRAM domain in the interval 405-476; that stretch reads GAWVGRIVDV…IYDLEGEVVG (72 aa).

It belongs to the methylthiotransferase family. RimO subfamily. [4Fe-4S] cluster serves as cofactor.

The protein resides in the cytoplasm. The enzyme catalyses L-aspartate(89)-[ribosomal protein uS12]-hydrogen + (sulfur carrier)-SH + AH2 + 2 S-adenosyl-L-methionine = 3-methylsulfanyl-L-aspartate(89)-[ribosomal protein uS12]-hydrogen + (sulfur carrier)-H + 5'-deoxyadenosine + L-methionine + A + S-adenosyl-L-homocysteine + 2 H(+). In terms of biological role, catalyzes the methylthiolation of an aspartic acid residue of ribosomal protein uS12. This chain is Ribosomal protein uS12 methylthiotransferase RimO, found in Synechococcus sp. (strain RCC307).